Consider the following 213-residue polypeptide: Large ribosomal subunit protein uL1 (213 aa).

This sequence belongs to the universal ribosomal protein uL1 family. Part of the 50S ribosomal subunit.

Functionally, binds directly to 23S rRNA. Probably involved in E site tRNA release. Protein L1 is also a translational repressor protein, it controls the translation of its operon by binding to its mRNA. This Picrophilus torridus (strain ATCC 700027 / DSM 9790 / JCM 10055 / NBRC 100828 / KAW 2/3) protein is Large ribosomal subunit protein uL1.